Here is a 641-residue protein sequence, read N- to C-terminus: Uromodulin (641 aa).

A signal peptide spans 1 to 24 (MGQPPLTWMLMVVVASWFITTAAT). Residue N25 is glycosylated (N-linked (GlcNAc...) asparagine). Positions 28-64 (EARWCSECHSNATCTEDEAVTTCTCQEGFTGDGLTCV) constitute an EGF-like 1 domain. Cystine bridges form between C32-C41, C35-C50, C52-C63, C69-C83, C77-C92, C94-C106, C112-C126, C120-C135, C137-C148, C150-C161, C155-C170, C174-C267, C195-C282, C217-C255, C223-C287, C248-C256, C297-C306, C300-C315, C317-C347, C335-C425, and C366-C389. Residues 65–107 (DLDECAIPGAHNCSANSSCVNTPGSFSCVCPEGFRLSPGLGCT) enclose the EGF-like 2; calcium-binding domain. N-linked (GlcNAc...) asparagine glycosylation is present at N76. The region spanning 108-149 (DVDECAEPGLSHCHALATCVNVVGNYLCVCPAGYRGDGWHCE) is the EGF-like 3; calcium-binding domain. Positions 150–171 (CSPGSCGPGLDCVPEGDALVCA) are beta hairpin. Positions 172–291 (DPCQAHRTLD…CHLAYCTDPS (120 aa)) are D10C. An N-linked (GlcNAc...) asparagine glycan is attached at N232. The N-linked (GlcNAc...) asparagine glycan is linked to N275. An EGF-like 4 domain is found at 292–323 (SVEGTCEECSIDEDCKSDNGRWHCQCKQDFNI). N322 carries N-linked (GlcNAc...) asparagine glycosylation. Positions 334–429 (ECGANDMKVS…KINFACSYPL (96 aa)) are ZP-N. The ZP domain occupies 334–589 (ECGANDMKVS…PTCSGTRFRS (256 aa)). The interval 430–453 (DMKVSLKTSLQPVVSALNITVGGT) is flexible ZP-N/ZP-C linker; important for secretion and polymerization into filaments. N447 carries N-linked (GlcNAc...) asparagine glycosylation. The tract at residues 454–464 (GMFTVRMALFQ) is internal hydrophobic patch (IHP). The interval 454–589 (GMFTVRMALF…PTCSGTRFRS (136 aa)) is ZP-C. 3 disulfide bridges follow: C506/C566, C527/C582, and C571/C578. An essential for cleavage by HPN region spans residues 586–589 (RFRS). Residues 598 to 606 (VLNLGPITR) are external hydrophobic patch (EHP); regulates polymerization into filaments. A lipid anchor (GPI-anchor amidated serine) is attached at S614. Positions 615–641 (RAAFSSLGLLKVWLPLLLSATLTLTFQ) are cleaved as a propeptide — removed in mature form.

Homodimer that then polymerizes into long filaments. The filaments can additionally assemble laterally to form a sheet. The filaments consist of a zigzag-shaped backbone with laterally protruding arms which interact with bacterial adhesin fimH. Two fimH molecules can bind to a single UMOD monomer. Post-translationally, N-glycosylated. In terms of processing, proteolytically cleaved at a conserved C-terminal proteolytic cleavage site to generate the secreted form found in urine. This cleavage is catalyzed by HPN.

The protein localises to the apical cell membrane. It is found in the basolateral cell membrane. The protein resides in the cell projection. Its subcellular location is the cilium membrane. It localises to the secreted. Functionally, functions in biogenesis and organization of the apical membrane of epithelial cells of the thick ascending limb of Henle's loop (TALH), where it promotes formation of complex filamentous gel-like structure that may play a role in the water barrier permeability. May serve as a receptor for binding and endocytosis of cytokines (IL-1, IL-2) and TNF. Facilitates neutrophil migration across renal epithelia. Its function is as follows. In the urine, may contribute to colloid osmotic pressure, retards passage of positively charged electrolytes, and inhibits formation of liquid containing supersaturated salts and subsequent formation of salt crystals. Protects against urinary tract infections by binding to type 1 fimbriated E.coli. Binds to bacterial adhesin fimH which mediates the stable formation of bacterial aggregates, prevents the binding of E.coli to uroplakins UPK1A and UPK1B which act as urothelial receptors for type I fimbriae, and allows for pathogen clearance through micturation. Also promotes aggregation of other bacteria including K.pneumoniae, P.aeruginosa and S.mitis and so may also protect against other uropathogens. The chain is Uromodulin (UMOD) from Pongo abelii (Sumatran orangutan).